The following is a 392-amino-acid chain: Tyrosine--tRNA ligase (392 aa).

Positions 41–50 (PTAPDLHLGH) match the 'HIGH' region motif. The short motif at 225–229 (KMSKS) is the 'KMSKS' region element. Lys228 is a binding site for ATP. Residues 330–390 (LRAVDFLVKI…VGKKKFYRVV (61 aa)) form the S4 RNA-binding domain.

It belongs to the class-I aminoacyl-tRNA synthetase family. TyrS type 2 subfamily. In terms of assembly, homodimer.

The protein localises to the cytoplasm. The enzyme catalyses tRNA(Tyr) + L-tyrosine + ATP = L-tyrosyl-tRNA(Tyr) + AMP + diphosphate + H(+). Its function is as follows. Catalyzes the attachment of tyrosine to tRNA(Tyr) in a two-step reaction: tyrosine is first activated by ATP to form Tyr-AMP and then transferred to the acceptor end of tRNA(Tyr). The polypeptide is Tyrosine--tRNA ligase (Aquifex aeolicus (strain VF5)).